Consider the following 627-residue polypeptide: Phosphomethylpyrimidine synthase (627 aa).

Over residues 1-24 the composition is skewed to polar residues; that stretch reads MSATQKNNITRLEQLDRQSTQPFP. The segment at 1 to 29 is disordered; the sequence is MSATQKNNITRLEQLDRQSTQPFPNSRKV. Substrate is bound by residues N231, M260, Y289, H325, 345–347, 386–389, and E425; these read SRG and DGLR. Residue H429 coordinates Zn(2+). Position 452 (Y452) interacts with substrate. Residue H493 coordinates Zn(2+). 3 residues coordinate [4Fe-4S] cluster: C573, C576, and C581.

This sequence belongs to the ThiC family. As to quaternary structure, homodimer. Requires [4Fe-4S] cluster as cofactor.

It catalyses the reaction 5-amino-1-(5-phospho-beta-D-ribosyl)imidazole + S-adenosyl-L-methionine = 4-amino-2-methyl-5-(phosphooxymethyl)pyrimidine + CO + 5'-deoxyadenosine + formate + L-methionine + 3 H(+). Its pathway is cofactor biosynthesis; thiamine diphosphate biosynthesis. Catalyzes the synthesis of the hydroxymethylpyrimidine phosphate (HMP-P) moiety of thiamine from aminoimidazole ribotide (AIR) in a radical S-adenosyl-L-methionine (SAM)-dependent reaction. This is Phosphomethylpyrimidine synthase from Pseudomonas aeruginosa (strain LESB58).